The primary structure comprises 719 residues: Phosphoribosylformylglycinamidine synthase subunit PurL (719 aa).

H47 is an active-site residue. Residues Y50 and K89 each contribute to the ATP site. Residue E91 coordinates Mg(2+). Residues 92-95 (SHNH) and R114 each bind substrate. The active-site Proton acceptor is the H93. D115 contributes to the Mg(2+) binding site. A substrate-binding site is contributed by Q238. D266 serves as a coordination point for Mg(2+). Position 310–312 (310–312 (ESQ)) interacts with substrate. The ATP site is built by D488 and G525. Residue N526 participates in Mg(2+) binding. S528 is a binding site for substrate.

The protein belongs to the FGAMS family. Monomer. Part of the FGAM synthase complex composed of 1 PurL, 1 PurQ and 2 PurS subunits.

It localises to the cytoplasm. The catalysed reaction is N(2)-formyl-N(1)-(5-phospho-beta-D-ribosyl)glycinamide + L-glutamine + ATP + H2O = 2-formamido-N(1)-(5-O-phospho-beta-D-ribosyl)acetamidine + L-glutamate + ADP + phosphate + H(+). Its pathway is purine metabolism; IMP biosynthesis via de novo pathway; 5-amino-1-(5-phospho-D-ribosyl)imidazole from N(2)-formyl-N(1)-(5-phospho-D-ribosyl)glycinamide: step 1/2. Its function is as follows. Part of the phosphoribosylformylglycinamidine synthase complex involved in the purines biosynthetic pathway. Catalyzes the ATP-dependent conversion of formylglycinamide ribonucleotide (FGAR) and glutamine to yield formylglycinamidine ribonucleotide (FGAM) and glutamate. The FGAM synthase complex is composed of three subunits. PurQ produces an ammonia molecule by converting glutamine to glutamate. PurL transfers the ammonia molecule to FGAR to form FGAM in an ATP-dependent manner. PurS interacts with PurQ and PurL and is thought to assist in the transfer of the ammonia molecule from PurQ to PurL. This is Phosphoribosylformylglycinamidine synthase subunit PurL from Jannaschia sp. (strain CCS1).